A 397-amino-acid polypeptide reads, in one-letter code: 16-O-methyltransferase bsc6 (397 aa).

Aspartate 262 contributes to the S-adenosyl-L-methionine binding site. Residue histidine 302 is the Proton acceptor of the active site.

The protein belongs to the class I-like SAM-binding methyltransferase superfamily. Cation-independent O-methyltransferase family. Requires S-adenosyl-L-methionine as cofactor.

The protein operates within mycotoxin biosynthesis. Its function is as follows. 16-O-methyltransferase; part of the gene cluster that mediates the biosynthesis of the diterpene glucoside brassicicene C. In the first step of the brassicicene C biosynthesis, the bifunctional diterpene synthase bsc8 that possesses both prenyl transferase and terpene cyclase activity, converts isopentenyl diphosphate and dimethylallyl diphosphate into geranylgeranyl diphosphate (GGDP) that is further converted into fusicocca-2,10(14)-diene, the first precursor for brassicicene C. Fusicocca-2,10(14)-diene is then substrate of cytochrome P450 monooxygenase bsc1 for hydroxylation at the C-8 position. Oxidation at C-16 position to aldehyde is then catalyzed by the cytochrome P450 monooyxygenase bsc7, yielding fusicocca-2,10(14)-diene-8-beta,16-diol. Follows the isomerization of the double bond and reduction of aldehyde to alcohol catalyzed by the short-chain dehydrogenase/reductase bsc3 to yield the diol compound fusicocca-1,10(14)-diene-8 beta,16-diol. The next step is the oxidation at the C-3 position of fusicocca-2,10(14)-diene-8-beta,16-diol catalyzed by the alpha-ketoglutarate dependent dioxygenase bsc9, to produce a triol compound. Methylation of the hydroxy group at position 16 is performed by the methyltransferase bsc6. 16-O-methylation is followed by oxidation at the C-13 position to ketone and an alkyl shift of the methyl group leads to brassicicene C. Although the probable acetyltransferase bsc4 is included in the gene cluster, no acetylation reactions are necessary for brassicicene C biosynthesis. However, the fact that brassicicene E, which is a structurally related compound having an acetoxy group at position 12, was previously isolated from another strain of A.brassicicola suggests that the ATCC 96836 strain might also produce a small amount of brassicicene E. In Alternaria brassicicola (Dark leaf spot agent), this protein is 16-O-methyltransferase bsc6.